We begin with the raw amino-acid sequence, 553 residues long: Mannuronan C5-epimerase AlgE4 (553 aa).

PbH1 repeat units follow at residues 133–155 (DRDVTIERVEVREMSGYGFDPHE), 157–179 (TINLTIRDSVAHDNGLDGFVADY), 180–202 (LVDSVFENNVAYANDRHGFNVVT), 204–226 (THDFVMTNNVAYGNGSSGLVVQR), 234–256 (PSNILIDGGAYYDNAREGVLLKM), 257–279 (TSDITLQNADIHGNGSSGVRVYG), 280–301 (AQDVQILDNQIHDNAQAAAVPE), and 320–342 (TLNTRIEGNTISGSANSTYGIQE). Residues 367–427 (YGPHSTVSGE…DILDGGAGRD (61 aa)) form a disordered region. 2 Hemolysin-type calcium-binding repeats span residues 403-420 (QGGSGADRLDGGAGDDIL) and 421-438 (DGGAGRDRLSGGAGADTF).

This sequence belongs to the D-mannuronate C5-epimerase family. The cofactor is Ca(2+).

The protein resides in the secreted. It carries out the reaction [(1-&gt;4)-beta-D-mannuronosyl](n) = [alginate](n). Its pathway is glycan biosynthesis; alginate biosynthesis. Its activity is regulated as follows. Inhibited by zinc. Converts beta-D-mannuronic acid (M) to alpha-L-guluronic acid (G), but introduces almost exclusively MG blocks, producing a polymer with non-gel-forming capacity. The polypeptide is Mannuronan C5-epimerase AlgE4 (Azotobacter vinelandii).